We begin with the raw amino-acid sequence, 448 residues long: Eukaryotic translation initiation factor 3 subunit E (448 aa).

The 170-residue stretch at 254-423 folds into the PCI domain; it reads TDLFFSPAYI…GTVIMNHPPQ (170 aa).

This sequence belongs to the eIF-3 subunit E family. As to quaternary structure, component of the eukaryotic translation initiation factor 3 (eIF-3) complex.

The protein localises to the cytoplasm. Component of the eukaryotic translation initiation factor 3 (eIF-3) complex, which is involved in protein synthesis of a specialized repertoire of mRNAs and, together with other initiation factors, stimulates binding of mRNA and methionyl-tRNAi to the 40S ribosome. The eIF-3 complex specifically targets and initiates translation of a subset of mRNAs involved in cell proliferation. This Emericella nidulans (strain FGSC A4 / ATCC 38163 / CBS 112.46 / NRRL 194 / M139) (Aspergillus nidulans) protein is Eukaryotic translation initiation factor 3 subunit E (int6).